The following is a 155-amino-acid chain: Transcriptional regulator MraZ (155 aa).

2 consecutive SpoVT-AbrB domains span residues 5 to 52 and 81 to 124; these read TYEN…SQDR and SMNL…EPAA.

The protein belongs to the MraZ family. In terms of assembly, forms oligomers.

The protein localises to the cytoplasm. The protein resides in the nucleoid. This is Transcriptional regulator MraZ from Pelagibacter ubique (strain HTCC1062).